Consider the following 78-residue polypeptide: Acyl carrier protein (78 aa).

Residues 2–77 form the Carrier domain; sequence STIEERVKKI…AAIDFINANQ (76 aa). Serine 37 bears the O-(pantetheine 4'-phosphoryl)serine mark.

The protein belongs to the acyl carrier protein (ACP) family. Post-translationally, 4'-phosphopantetheine is transferred from CoA to a specific serine of apo-ACP by AcpS. This modification is essential for activity because fatty acids are bound in thioester linkage to the sulfhydryl of the prosthetic group.

It localises to the cytoplasm. Its pathway is lipid metabolism; fatty acid biosynthesis. Carrier of the growing fatty acid chain in fatty acid biosynthesis. This is Acyl carrier protein from Yersinia pseudotuberculosis serotype O:1b (strain IP 31758).